The following is a 360-amino-acid chain: Lipid-A-disaccharide synthase (360 aa).

This sequence belongs to the LpxB family.

The enzyme catalyses a lipid X + a UDP-2-N,3-O-bis[(3R)-3-hydroxyacyl]-alpha-D-glucosamine = a lipid A disaccharide + UDP + H(+). The protein operates within bacterial outer membrane biogenesis; LPS lipid A biosynthesis. Functionally, condensation of UDP-2,3-diacylglucosamine and 2,3-diacylglucosamine-1-phosphate to form lipid A disaccharide, a precursor of lipid A, a phosphorylated glycolipid that anchors the lipopolysaccharide to the outer membrane of the cell. The sequence is that of Lipid-A-disaccharide synthase from Helicobacter pylori (strain HPAG1).